The sequence spans 93 residues: Small ribosomal subunit protein uS19 (93 aa).

The protein belongs to the universal ribosomal protein uS19 family.

Functionally, protein S19 forms a complex with S13 that binds strongly to the 16S ribosomal RNA. The chain is Small ribosomal subunit protein uS19 from Leifsonia xyli subsp. xyli (strain CTCB07).